A 157-amino-acid chain; its full sequence is MCSIWLTFFLSFLILNTKAEQVYQTCADESFEPNDYWKQKMLCMAYRFNFYGYKSNSMYAFMDCTFIRVGWMDKGTRKWNVAKMAADMHASGFPDRTAELTEIEAMCNMEFRNKLGPMSYYRCIETSKQGPGEFKQMLRNREVEFFSKNQCQGVDLD.

The first 19 residues, 1-19, serve as a signal peptide directing secretion; sequence MCSIWLTFFLSFLILNTKA.

It belongs to the PBP/GOBP family. In terms of assembly, interacts with mouse TLR1; the interaction promotes activation of canonical NF-kappa-B signaling in host macrophages. Interacts with human TLR1. Interacts with mouse TLR4; the interaction promotes activation of canonical NF-kappa-B signaling in host macrophages. Interacts with human TLR4. In terms of tissue distribution, female salivary gland (at protein level).

The protein localises to the secreted. Its function is as follows. Activates MyD88-dependent canonical NF-kappa-B signaling in host macrophages via interaction with host TLR1 and TLR4; this drives the expression of neutrophil chemoattractants, followed by the subsequent influx of neutrophils and recruitment of myeloid cells at the bite site. In terms of biological role, (Microbial infection) Promotes Zika virus infection in mouse model by facilitating recruitment of flavivirus-permissive myeloid cells at the bite site. (Microbial infection) Promotes dengue virus infection in mouse model by facilitating recruitment of flavivirus-permissive myeloid cells at the bite site. The sequence is that of Neutrophil recruitment protein from Aedes aegypti (Yellowfever mosquito).